The primary structure comprises 466 residues: ATP synthase subunit beta (466 aa).

155-162 lines the ATP pocket; the sequence is GGAGVGKT.

It belongs to the ATPase alpha/beta chains family. In terms of assembly, F-type ATPases have 2 components, CF(1) - the catalytic core - and CF(0) - the membrane proton channel. CF(1) has five subunits: alpha(3), beta(3), gamma(1), delta(1), epsilon(1). CF(0) has three main subunits: a(1), b(2) and c(9-12). The alpha and beta chains form an alternating ring which encloses part of the gamma chain. CF(1) is attached to CF(0) by a central stalk formed by the gamma and epsilon chains, while a peripheral stalk is formed by the delta and b chains.

The protein resides in the cell inner membrane. The enzyme catalyses ATP + H2O + 4 H(+)(in) = ADP + phosphate + 5 H(+)(out). In terms of biological role, produces ATP from ADP in the presence of a proton gradient across the membrane. The catalytic sites are hosted primarily by the beta subunits. In Bordetella pertussis (strain Tohama I / ATCC BAA-589 / NCTC 13251), this protein is ATP synthase subunit beta.